Here is a 430-residue protein sequence, read N- to C-terminus: 26S protease regulatory subunit 6A (430 aa).

218 to 225 (GPPGTGKT) contacts ATP.

The protein belongs to the AAA ATPase family. Component of the 19S proteasome regulatory particle complex. The 26S proteasome consists of a 20S core particle (CP) and two 19S regulatory subunits (RP). The regulatory particle is made of a lid composed of 9 subunits, a base containing 6 ATPases including the PSMC3 homolog rpt-5 and few additional components.

The protein localises to the cytoplasm. Its subcellular location is the nucleus. Component of the 26S proteasome, a multiprotein complex involved in the ATP-dependent degradation of ubiquitinated proteins. This complex plays a key role in the maintenance of protein homeostasis by removing misfolded or damaged proteins, which could impair cellular functions, and by removing proteins whose functions are no longer required. Therefore, the proteasome participates in numerous cellular processes, including cell cycle progression, apoptosis, or DNA damage repair. Belongs to the heterohexameric ring of AAA (ATPases associated with diverse cellular activities) proteins that unfolds ubiquitinated target proteins that are concurrently translocated into a proteolytic chamber and degraded into peptides. This is 26S protease regulatory subunit 6A from Caenorhabditis elegans.